Reading from the N-terminus, the 538-residue chain is Sucrose transport protein SUT1 (538 aa).

Topologically, residues 1–52 (MARGSGAGGGGGGGGGGLELSVGVGGGGGARGGGGGEAAAAVETAAPISLGR) are cytoplasmic. The chain crosses the membrane as a helical span at residues 53–73 (LILSGMVAGGVQYGWALQLSL). The Extracellular segment spans residues 74–81 (LTPYVQTL). A helical transmembrane segment spans residues 82–102 (GLSHALTSFMWLCGPIAGMVV). Topologically, residues 103–123 (QPCVGLYSDRCTSKWGRRRPY) are cytoplasmic. Residues 124-144 (ILTGCVLICLAVVVIGFSADI) traverse the membrane as a helical segment. Topologically, residues 145–162 (GYAMGDTKEDCSVYHGSR) are extracellular. Residues 163-183 (WHAAIVYVLGFWLLDFSNNTV) traverse the membrane as a helical segment. Over 184 to 198 (QGPARALMADLSGRH) the chain is Cytoplasmic. Residues 199 to 219 (GPGTANSIFCSWMAMGNILGY) form a helical membrane-spanning segment. The Extracellular portion of the chain corresponds to 220–247 (SSGSTNNWHKWFPFLKTRACCEACANLK). The helical transmembrane segment at 248–268 (GAFLVAVIFLSLCLVITLIFA) threads the bilayer. Residues 269–306 (KEVPFKGNAALPTKSNEPAEPEGTGPLAVLKGFRNLPT) are Cytoplasmic-facing. The helical transmembrane segment at 307–327 (GMPSVLIVTGLTWLSWFPFIL) threads the bilayer. The Extracellular segment spans residues 328-357 (YDTDWMGREIYHGDPKGTDPQIEAFNQGVR). Residues 358–378 (AGAFGLLLNSIVLGFSSFLIE) traverse the membrane as a helical segment. The Cytoplasmic segment spans residues 379 to 388 (PMCRKVGPRV). Residues 389–409 (VWVTSNFLVCIAMAATALISF) traverse the membrane as a helical segment. Residues 410-433 (WSLKDFHGTVQKAITADKSIKAVC) lie on the Extracellular side of the membrane. A helical membrane pass occupies residues 434–454 (LVLFAFLGVPLAVLYSVPFAV). Residues 455 to 470 (TAQLAATRGGGQGLCT) lie on the Cytoplasmic side of the membrane. The chain crosses the membrane as a helical span at residues 471 to 491 (GVLNISIVIPQVVIALGAGPW). The Extracellular segment spans residues 492-499 (DELFGKGN). Residues 500-520 (IPAFGLASGFALIGGVAGIFL) traverse the membrane as a helical segment. Over 521 to 538 (LPKISKRQFRSVSMGGGH) the chain is Cytoplasmic.

The protein belongs to the glycoside-pentoside-hexuronide (GPH) cation symporter transporter (TC 2.A.2.4) family. Homodimer.

The protein localises to the cell membrane. It functions in the pathway glycan biosynthesis; sucrose metabolism. Responsible for the transport of sucrose into the cell, with the concomitant uptake of protons (symport system). May also transport other glucosides. May be required for apoplastic phloem sucrose loading in source tissues (e.g. leaves) in order to transport it to sink tissues (e.g. roots, flowers). The sequence is that of Sucrose transport protein SUT1 (SUT1) from Oryza sativa subsp. indica (Rice).